Reading from the N-terminus, the 124-residue chain is Alpha-endosulfine (124 aa).

S74 carries the phosphoserine; by GWL modification. The disordered stretch occupies residues 99–124 (VTGDHIPTPQDLPQRKNTILTSKLAG). A compositionally biased stretch (polar residues) spans 113-124 (RKNTILTSKLAG).

It belongs to the endosulfine family. Post-translationally, phosphorylation at Ser-74 by gwl during mitosis is essential for interaction with ppp2r2d (PR55-delta) and subsequent inactivation of PP2A.

The protein localises to the cytoplasm. In terms of biological role, protein phosphatase inhibitor that specifically inhibits protein phosphatase 2A (PP2A) during mitosis. When phosphorylated at Ser-67 during mitosis, specifically interacts with ppp2r2d (PR55-delta) and inhibits its activity, leading to inactivation of PP2A, an essential condition to keep cyclin-B1-CDK1 activity high during M phase. This is Alpha-endosulfine (ensa) from Danio rerio (Zebrafish).